The primary structure comprises 225 residues: Uracil phosphoribosyltransferase (225 aa).

36–40 (KGLVR) contacts GTP. Residues arginine 86, arginine 111, and 145–153 (DPMLATGST) contribute to the 5-phospho-alpha-D-ribose 1-diphosphate site. Uracil contacts are provided by residues isoleucine 210 and 215–217 (GDA). A 5-phospho-alpha-D-ribose 1-diphosphate-binding site is contributed by aspartate 216.

Belongs to the UPRTase family. Mg(2+) is required as a cofactor.

The catalysed reaction is UMP + diphosphate = 5-phospho-alpha-D-ribose 1-diphosphate + uracil. It participates in pyrimidine metabolism; UMP biosynthesis via salvage pathway; UMP from uracil: step 1/1. With respect to regulation, allosterically activated by GTP. Catalyzes the conversion of uracil and 5-phospho-alpha-D-ribose 1-diphosphate (PRPP) to UMP and diphosphate. This chain is Uracil phosphoribosyltransferase, found in Haloarcula marismortui (strain ATCC 43049 / DSM 3752 / JCM 8966 / VKM B-1809) (Halobacterium marismortui).